A 264-amino-acid chain; its full sequence is Thymidylate synthase (264 aa).

Arginine 21 is a dUMP binding site. Position 51 (histidine 51) interacts with (6R)-5,10-methylene-5,6,7,8-tetrahydrofolate. Position 126 to 127 (126 to 127 (RR)) interacts with dUMP. Cysteine 146 serves as the catalytic Nucleophile. DUMP is bound by residues 166–169 (RSAD), asparagine 177, and 207–209 (HLY). Aspartate 169 contributes to the (6R)-5,10-methylene-5,6,7,8-tetrahydrofolate binding site. Alanine 263 serves as a coordination point for (6R)-5,10-methylene-5,6,7,8-tetrahydrofolate.

This sequence belongs to the thymidylate synthase family. Bacterial-type ThyA subfamily. Homodimer.

The protein resides in the cytoplasm. It carries out the reaction dUMP + (6R)-5,10-methylene-5,6,7,8-tetrahydrofolate = 7,8-dihydrofolate + dTMP. It functions in the pathway pyrimidine metabolism; dTTP biosynthesis. Its function is as follows. Catalyzes the reductive methylation of 2'-deoxyuridine-5'-monophosphate (dUMP) to 2'-deoxythymidine-5'-monophosphate (dTMP) while utilizing 5,10-methylenetetrahydrofolate (mTHF) as the methyl donor and reductant in the reaction, yielding dihydrofolate (DHF) as a by-product. This enzymatic reaction provides an intracellular de novo source of dTMP, an essential precursor for DNA biosynthesis. This Aromatoleum aromaticum (strain DSM 19018 / LMG 30748 / EbN1) (Azoarcus sp. (strain EbN1)) protein is Thymidylate synthase.